Consider the following 351-residue polypeptide: Holliday junction branch migration complex subunit RuvB (351 aa).

The interval 1 to 186 is large ATPase domain (RuvB-L); that stretch reads MDEKIETRLI…FGIVQRLEFY (186 aa). Residues isoleucine 25, arginine 26, glycine 67, lysine 70, threonine 71, threonine 72, 133–135, arginine 176, tyrosine 186, and arginine 223 each bind ATP; that span reads EDF. A Mg(2+)-binding site is contributed by threonine 71. Residues 187-257 are small ATPAse domain (RuvB-S); it reads RIPDLIHIVK…IAKEALDLLN (71 aa). The interval 260 to 351 is head domain (RuvB-H); that stretch reads IRGLDVMDRK…ENFDLLGKVE (92 aa). Positions 296, 315, and 320 each coordinate DNA.

This sequence belongs to the RuvB family. As to quaternary structure, homohexamer. Forms an RuvA(8)-RuvB(12)-Holliday junction (HJ) complex. HJ DNA is sandwiched between 2 RuvA tetramers; dsDNA enters through RuvA and exits via RuvB. An RuvB hexamer assembles on each DNA strand where it exits the tetramer. Each RuvB hexamer is contacted by two RuvA subunits (via domain III) on 2 adjacent RuvB subunits; this complex drives branch migration. In the full resolvosome a probable DNA-RuvA(4)-RuvB(12)-RuvC(2) complex forms which resolves the HJ.

Its subcellular location is the cytoplasm. The enzyme catalyses ATP + H2O = ADP + phosphate + H(+). Functionally, the RuvA-RuvB-RuvC complex processes Holliday junction (HJ) DNA during genetic recombination and DNA repair, while the RuvA-RuvB complex plays an important role in the rescue of blocked DNA replication forks via replication fork reversal (RFR). RuvA specifically binds to HJ cruciform DNA, conferring on it an open structure. The RuvB hexamer acts as an ATP-dependent pump, pulling dsDNA into and through the RuvAB complex. RuvB forms 2 homohexamers on either side of HJ DNA bound by 1 or 2 RuvA tetramers; 4 subunits per hexamer contact DNA at a time. Coordinated motions by a converter formed by DNA-disengaged RuvB subunits stimulates ATP hydrolysis and nucleotide exchange. Immobilization of the converter enables RuvB to convert the ATP-contained energy into a lever motion, pulling 2 nucleotides of DNA out of the RuvA tetramer per ATP hydrolyzed, thus driving DNA branch migration. The RuvB motors rotate together with the DNA substrate, which together with the progressing nucleotide cycle form the mechanistic basis for DNA recombination by continuous HJ branch migration. Branch migration allows RuvC to scan DNA until it finds its consensus sequence, where it cleaves and resolves cruciform DNA. This is Holliday junction branch migration complex subunit RuvB from Coxiella burnetii (strain RSA 331 / Henzerling II).